The following is a 73-amino-acid chain: Large ribosomal subunit protein bL28 (73 aa).

It belongs to the bacterial ribosomal protein bL28 family.

This chain is Large ribosomal subunit protein bL28, found in Buchnera aphidicola subsp. Cinara cedri (strain Cc).